The sequence spans 316 residues: Transaldolase (316 aa).

Lys-125 (schiff-base intermediate with substrate) is an active-site residue.

This sequence belongs to the transaldolase family. Type 1 subfamily. As to quaternary structure, homodimer.

It is found in the cytoplasm. It catalyses the reaction D-sedoheptulose 7-phosphate + D-glyceraldehyde 3-phosphate = D-erythrose 4-phosphate + beta-D-fructose 6-phosphate. It functions in the pathway carbohydrate degradation; pentose phosphate pathway; D-glyceraldehyde 3-phosphate and beta-D-fructose 6-phosphate from D-ribose 5-phosphate and D-xylulose 5-phosphate (non-oxidative stage): step 2/3. In terms of biological role, transaldolase is important for the balance of metabolites in the pentose-phosphate pathway. This chain is Transaldolase, found in Acidovorax sp. (strain JS42).